Here is a 44-residue protein sequence, read N- to C-terminus: Unknown protein 9 (44 aa).

This Pseudotsuga menziesii (Douglas-fir) protein is Unknown protein 9.